The primary structure comprises 189 residues: Receptor activity-modifying protein 2 (189 aa).

Positions 1–44 (MAPLRVERAPGGSRLGVTRAQRPTALCLPPLLLLLLLLLGAVSA) are cleaved as a signal peptide. The Extracellular segment spans residues 45-157 (SPESLNQSLP…VQPTFSDPPE (113 aa)). A compositionally biased stretch (polar residues) spans 49–61 (LNQSLPESQNQSH). The interval 49–69 (LNQSLPESQNQSHPTEDSLVS) is disordered. N-linked (GlcNAc...) asparagine glycans are attached at residues Asn-50, Asn-58, Asn-99, and Asn-144. Intrachain disulfides connect Cys-83–Cys-113 and Cys-98–Cys-145. The helical transmembrane segment at 158–179 (DVLLAMIIAPICLIPFLVTLVV) threads the bilayer. At 180 to 189 (WRSKDSDAQA) the chain is on the cytoplasmic side.

The protein belongs to the RAMP family. In terms of assembly, heterodimer of CALCRL and RAMP2; the interaction forms the receptor complex for adrenomedullin/ADM. Heterodimer of CALCR and RAMP2; interaction forms the AMYR2 receptor complex for calcitonin/CALC and amylin/IAPP. Ubiquitous. Expressed predominantly in embryonic brain, lung and gut and in adult heart, lung, skeletal muscle and brain.

It localises to the cell membrane. Functionally, accessory protein that interacts with and modulates the function of G-protein coupled receptors including calcitonin gene-related peptide type 1 receptor (CALCRL) and calcitonin receptor (CALCR). Required for the transport of CALCRL to the plasma membrane. Together with CALCRL, form a receptor complex for adrenomedullin/ADM. Together with CALCR, act as a receptor complex for calcitonin/CT/CALC. Together with CALCR, also act as a receptor complex for amylin/IAPP. In Mus musculus (Mouse), this protein is Receptor activity-modifying protein 2.